Reading from the N-terminus, the 164-residue chain is Putative F-box protein At1g59675 (164 aa).

In terms of domain architecture, F-box spans 9 to 56 (SQSDHVPLDLTIEILSRLPAKSVGRFRSVSKLWSANTTSQNFINSFAT).

This Arabidopsis thaliana (Mouse-ear cress) protein is Putative F-box protein At1g59675.